The primary structure comprises 270 residues: Protoheme IX farnesyltransferase (270 aa).

The next 7 helical transmembrane spans lie at 13–30 (LALL…LVPD), 33–53 (HATL…GSAL), 95–115 (LLVL…ALAW), 129–149 (LALA…WTLA), 156–176 (YRII…FWLF), 207–227 (LWLG…LMAP), and 249–269 (EATL…ALLL).

It belongs to the UbiA prenyltransferase family. Protoheme IX farnesyltransferase subfamily.

Its subcellular location is the cell inner membrane. The enzyme catalyses heme b + (2E,6E)-farnesyl diphosphate + H2O = Fe(II)-heme o + diphosphate. It functions in the pathway porphyrin-containing compound metabolism; heme O biosynthesis; heme O from protoheme: step 1/1. In terms of biological role, converts heme B (protoheme IX) to heme O by substitution of the vinyl group on carbon 2 of heme B porphyrin ring with a hydroxyethyl farnesyl side group. This chain is Protoheme IX farnesyltransferase, found in Geobacter sulfurreducens (strain ATCC 51573 / DSM 12127 / PCA).